Here is a 264-residue protein sequence, read N- to C-terminus: Indole-3-glycerol phosphate synthase (264 aa).

The protein belongs to the TrpC family.

It carries out the reaction 1-(2-carboxyphenylamino)-1-deoxy-D-ribulose 5-phosphate + H(+) = (1S,2R)-1-C-(indol-3-yl)glycerol 3-phosphate + CO2 + H2O. Its pathway is amino-acid biosynthesis; L-tryptophan biosynthesis; L-tryptophan from chorismate: step 4/5. The sequence is that of Indole-3-glycerol phosphate synthase from Rhizorhabdus wittichii (strain DSM 6014 / CCUG 31198 / JCM 15750 / NBRC 105917 / EY 4224 / RW1) (Sphingomonas wittichii).